A 186-amino-acid chain; its full sequence is Biphenyl dioxygenase subunit beta (186 aa).

This sequence belongs to the bacterial ring-hydroxylating dioxygenase beta subunit family. Heterohexamer consisting of 3 BphA subunits and 3 BphE subunits. A ferredoxin (BphF) and a ferredoxin reductase (BphG) must be present to obtain activity.

The catalysed reaction is biphenyl + NADH + O2 + H(+) = (2R,3S)-3-phenylcyclohexa-3,5-diene-1,2-diol + NAD(+). Its pathway is xenobiotic degradation; biphenyl degradation; 2-hydroxy-2,4-pentadienoate and benzoate from biphenyl: step 1/4. In terms of biological role, the beta subunit may be responsible for the substrate specificity of the enzyme. This is Biphenyl dioxygenase subunit beta (bphE) from Comamonas testosteroni (Pseudomonas testosteroni).